The sequence spans 3855 residues: Replicase polyprotein 1ab (3855 aa).

Residues 8–28 (CMCTPAARVFWNAGQVFCTRC) form a C4-type; atypical zinc finger. The region spanning 69-180 (ECTPSGCCWL…QPFCPFEEAH (112 aa)) is the Peptidase C31 domain. The PCP1-alpha stretch occupies residues 69 to 182 (ECTPSGCCWL…FCPFEEAHSS (114 aa)). Catalysis depends on for nsp1-alpha papain-like cysteine proteinase activity residues Cys-76 and His-146. The interval 203–204 (MM) is important for host EIF2AK2 inhibition. A PCP1-beta region spans residues 269–384 (PDVFDGKCWL…IFRFGAHKWY (116 aa)). The Peptidase C32 domain occupies 269–385 (PDVFDGKCWL…FRFGAHKWYG (117 aa)). Residues Cys-276 and His-345 each act as for nsp1-beta papain-like cysteine proteinase activity in the active site. The tract at residues 418–505 (ITTYSPPTDG…GVHWEVEVRS (88 aa)) is OTU-like. Residues 420 to 527 (TYSPPTDGSC…VGVCSEGCVA (108 aa)) enclose the Peptidase C33 domain. Active-site for nsp2 cysteine proteinase activity residues include Cys-429 and His-498. 2 disordered regions span residues 752-797 (PSDP…DAGA) and 1047-1088 (PPPK…SRVS). Polar residues predominate over residues 775 to 790 (APASTTTLVREQTPDN). 3 consecutive transmembrane segments (helical) span residues 1134 to 1154 (GSMA…LLLC), 1179 to 1199 (GVFG…SNPV), and 1252 to 1272 (WHVL…VYVV). Residues 1149–1272 (LALLLCRSYP…DLALSLVYVV (124 aa)) are HD1. The WCCH stretch occupies residues 1327–1351 (TGWRGCWRGESPIHQPHQKPIAYAN). 5 helical membrane passes run 1468 to 1488 (LAVA…LWFT), 1521 to 1541 (LCVS…QLSG), 1543 to 1563 (EVGI…RMAL), 1573 to 1593 (AFCA…PILL), and 1609 to 1629 (FLVF…GLLW). Positions 1468–1629 (LAVAQVSAWT…LSLGITGLLW (162 aa)) are HD2. One can recognise a Peptidase S32 domain in the interval 1694-1896 (GAFRTHKPCL…SLLASVPVVE (203 aa)). Residues His-1732, Asp-1757, and Ser-1810 each act as charge relay system; for serine protease nsp4 activity in the active site. The next 4 membrane-spanning stretches (helical) occupy residues 1919–1939 (WTPI…AVLV), 1943–1963 (FSFA…VLMI), 1977–1997 (LAFY…TFAG), and 2020–2040 (SCVP…LWLF). An HD3 region spans residues 1919–2040 (WTPIVAVGFF…HTLGVILWLF (122 aa)). The 164-residue stretch at 2381 to 2544 (IISQLQGLTT…LPYKLYPVRG (164 aa)) folds into the NiRAN domain. In terms of domain architecture, RdRp catalytic spans 2783–2917 (GRCLEADLAS…YAERPTFPNY (135 aa)). The 64-residue stretch at 3038–3101 (GKKFRHCGIC…SPVGAGRSPL (64 aa)) folds into the AV ZBD domain. Zn(2+) contacts are provided by Cys-3044, Cys-3047, Cys-3057, Cys-3062, His-3065, His-3067, His-3069, His-3071, Cys-3078, His-3080, Cys-3087, and Cys-3090. The (+)RNA virus helicase ATP-binding domain maps to 3151-3310 (DLSDGDYQVV…VFDQMPQKQL (160 aa)). 3186-3193 (GPPGSGKT) serves as a coordination point for ATP. The (+)RNA virus helicase C-terminal domain occupies 3311–3440 (TTIYRFGPNI…FSRGDELVVL (130 aa)). Residues 3479-3576 (EGSCMPLPQV…LTLYIRGEPQ (98 aa)) form the AV-Nsp11N/CoV-Nsp15M domain. The 123-residue stretch at 3578–3700 (LPETLVSTGR…MVWKGATAYF (123 aa)) folds into the NendoU domain. Catalysis depends on residues His-3609, His-3624, and Lys-3653.

It belongs to the arteriviridae polyprotein family. As to quaternary structure, nsp1-alpha papain-like: Interacts with host RNF31. In terms of assembly, interacts with host EIF2AK2; this interaction occurs in host stress granules and leads to EIF2AK2 inhibition. Interacts with host G3BP1; this interaction probably plays a role in Nsp1-beta-mediated inhibition of host EIF2AK2. Interacts with host DDX18; this interaction redistributes host DDX18 to the cytoplasm. As to quaternary structure, interacts with host IFITM1. In terms of assembly, interacts with host DDX5. Interacts with host OTULIN. As to quaternary structure, interacts with host LGALS3. Post-translationally, specific enzymatic cleavages in vivo by its own proteases yield mature proteins. Nsp1 is autocleaved into two subunits, Nsp1-alpha and Nsp1-beta. There are two alternative pathways for processing. Either nsp4-5 is cleaved, which represents the major pathway or the nsp5-6 and nsp6-7 are processed, which represents the minor pathway. The major pathway occurs when nsp2 acts as a cofactor for nsp4.

The protein resides in the host nucleus. It is found in the host cytoplasm. It localises to the host membrane. Its subcellular location is the host endoplasmic reticulum. The protein localises to the host perinuclear region. The catalysed reaction is RNA(n) + a ribonucleoside 5'-triphosphate = RNA(n+1) + diphosphate. It carries out the reaction ATP + H2O = ADP + phosphate + H(+). It catalyses the reaction Thiol-dependent hydrolysis of ester, thioester, amide, peptide and isopeptide bonds formed by the C-terminal Gly of ubiquitin (a 76-residue protein attached to proteins as an intracellular targeting signal).. The enzyme catalyses uridylyl-uridylyl-ribonucleotide-RNA = a 3'-end uridylyl-2',3'-cyclophospho-uridine-RNA + a 5'-end dephospho-ribonucleoside-RNA. Functionally, contains the activities necessary for the transcription of negative stranded RNA, leader RNA, subgenomic mRNAs and progeny virion RNA as well as proteinases responsible for the cleavage of the polyprotein into functional products. Its function is as follows. Inhibits host IFN-beta production. Plays a role in the degradation of the host transcriptional activator CREBBP protein. The degradation of host CREBBP which is a key component of the IFN enhanceosome is likely responsible for the inhibition of interferon mediated by Nsp1-alpha. Also participates in the inhibition of host NF-kappa-B activation by counteracting LUBAC-dependent induction of NF-kappa-B. Reduces host NEMO ubiquitination by blocking the interaction between the two LUBAC complex components RNF31 and SHARPIN. In terms of biological role, plays a role in blocking host mRNA nuclear export to the cytoplasm and subversion of host protein synthesis. Additionally, inhibits the interferon-activated JAK/STAT signal transduction by mediating the ubiquitination and subsequent proteasomal degradation of host KPNA1. Repurposes the host antiviral stress granules into a proviral platform to counteract the EIF2AK2/PKR restriction, thereby regulating the host inflammatory response. Multifunctional protein that acts as a viral protease and as a viral antagonist of host immune response. Cleaves the nsp2/nsp3 site in the viral polyprotein. Displays deubiquitinating activity that cleaves both ubiquitinated and ISGylated products and therefore inhibits ubiquitin and ISG15-dependent host innate immunity. Also deubiquinates host NFKBIA, thereby interfering with NFKBIA degradation and impairing subsequent NF-kappa-B activation. Functionally, plays a role in the inhibition of the immune response by interacting with host IFITM1. This interaction leads to the proteasomal degradation of the IFN-induced antiviral protein IFITM1. Its function is as follows. Cleaves the majority of cleavage sites present in the C-terminus of the polyprotein. Triggers host apoptosis through caspase-3, -8, and -9 activations. Subverts host innate immune responses through its protease activity. Targets the NF-kappa-B essential modulator NEMO and mediates its cleavage. Blocks host interferon beta induction and downstream signaling by cleaving mitochondrial MAVS, dislodging it from the mitochondria. Impairs host defense by cleaving host mRNA-decapping enzyme DCP1A to attenuate its antiviral activity. In terms of biological role, plays a role in the initial induction of autophagosomes from host endoplasmic reticulum. Plays a role in the inhibition of host STAT3 signaling pathway by inducing the degradation of STAT3. Functionally, responsible for replication and transcription of the viral RNA genome. Its function is as follows. Displays RNA and DNA duplex-unwinding activities with 5' to 3' polarity. In terms of biological role, plays a role in viral transcription/replication and prevents the simultaneous activation of host cell dsRNA sensors, such as MDA5/IFIH1, OAS, PKR and NLRP3 inflammasome. Acts by degrading the 5'-polyuridines generated during replication of the poly(A) region of viral genomic and subgenomic RNAs. Catalyzes a two-step reaction in which a 2'3'-cyclic phosphate (2'3'-cP) is first generated by 2'-O transesterification, which is then hydrolyzed to a 3'-phosphate (3'-P). If not degraded, poly(U) RNA would hybridize with poly(A) RNA tails and activate host dsRNA sensors. Also plays a role in the inhibition of host type I interferon production by recruiting host OTULIN to promote removal of linear ubiquitination targeting host NEMO. The chain is Replicase polyprotein 1ab (rep) from Sus scrofa (Pig).